The sequence spans 420 residues: UDP-N-acetylglucosamine 1-carboxyvinyltransferase (420 aa).

22-23 (KN) lines the phosphoenolpyruvate pocket. Arg-92 is a UDP-N-acetyl-alpha-D-glucosamine binding site. Cys-116 (proton donor) is an active-site residue. Cys-116 carries the post-translational modification 2-(S-cysteinyl)pyruvic acid O-phosphothioketal. UDP-N-acetyl-alpha-D-glucosamine is bound by residues 121-125 (RPIDL), Asp-307, and Leu-329.

This sequence belongs to the EPSP synthase family. MurA subfamily.

It localises to the cytoplasm. It catalyses the reaction phosphoenolpyruvate + UDP-N-acetyl-alpha-D-glucosamine = UDP-N-acetyl-3-O-(1-carboxyvinyl)-alpha-D-glucosamine + phosphate. It participates in cell wall biogenesis; peptidoglycan biosynthesis. In terms of biological role, cell wall formation. Adds enolpyruvyl to UDP-N-acetylglucosamine. The polypeptide is UDP-N-acetylglucosamine 1-carboxyvinyltransferase (Nitratiruptor sp. (strain SB155-2)).